A 315-amino-acid chain; its full sequence is Malate dehydrogenase (315 aa).

Residues 10–15 (GSGFTG) and Asp-34 contribute to the NAD(+) site. Substrate is bound by residues Arg-85 and Arg-91. NAD(+)-binding positions include Asn-98 and 121 to 123 (LTN). 2 residues coordinate substrate: Asn-123 and Arg-154. Catalysis depends on His-178, which acts as the Proton acceptor.

Belongs to the LDH/MDH superfamily. MDH type 3 family.

It carries out the reaction (S)-malate + NAD(+) = oxaloacetate + NADH + H(+). Catalyzes the reversible oxidation of malate to oxaloacetate. The polypeptide is Malate dehydrogenase (Symbiobacterium thermophilum (strain DSM 24528 / JCM 14929 / IAM 14863 / T)).